Reading from the N-terminus, the 399-residue chain is Probable peptidoglycan glycosyltransferase FtsW (399 aa).

9 helical membrane-spanning segments follow: residues 19 to 39, 61 to 81, 85 to 105, 114 to 134, 160 to 180, 198 to 218, 285 to 305, 314 to 334, and 350 to 370; these read PLPV…VMIS, ILFA…PVSW, SGWL…TPLG, WIPM…CLIA, VLGV…TVVL, FMPL…TQPY, LLGA…GLVI, MAFG…QAGI, and LPLV…IAVI.

This sequence belongs to the SEDS family. FtsW subfamily.

It is found in the cell inner membrane. The enzyme catalyses [GlcNAc-(1-&gt;4)-Mur2Ac(oyl-L-Ala-gamma-D-Glu-L-Lys-D-Ala-D-Ala)](n)-di-trans,octa-cis-undecaprenyl diphosphate + beta-D-GlcNAc-(1-&gt;4)-Mur2Ac(oyl-L-Ala-gamma-D-Glu-L-Lys-D-Ala-D-Ala)-di-trans,octa-cis-undecaprenyl diphosphate = [GlcNAc-(1-&gt;4)-Mur2Ac(oyl-L-Ala-gamma-D-Glu-L-Lys-D-Ala-D-Ala)](n+1)-di-trans,octa-cis-undecaprenyl diphosphate + di-trans,octa-cis-undecaprenyl diphosphate + H(+). The protein operates within cell wall biogenesis; peptidoglycan biosynthesis. In terms of biological role, peptidoglycan polymerase that is essential for cell division. The polypeptide is Probable peptidoglycan glycosyltransferase FtsW (Marinobacter nauticus (strain ATCC 700491 / DSM 11845 / VT8) (Marinobacter aquaeolei)).